Consider the following 388-residue polypeptide: Ribonuclease D (388 aa).

The 168-residue stretch at 24-191 (QYVSDEASLN…LYPQLADKLK (168 aa)) folds into the 3'-5' exonuclease domain. Residues 230 to 310 (TEHQLAYLKV…QTADLSNPPE (81 aa)) form the HRDC domain.

It belongs to the RNase D family. Requires a divalent metal cation as cofactor.

Its subcellular location is the cytoplasm. It carries out the reaction Exonucleolytic cleavage that removes extra residues from the 3'-terminus of tRNA to produce 5'-mononucleotides.. Its function is as follows. Exonuclease involved in the 3' processing of various precursor tRNAs. Initiates hydrolysis at the 3'-terminus of an RNA molecule and releases 5'-mononucleotides. The protein is Ribonuclease D of Shewanella sp. (strain ANA-3).